We begin with the raw amino-acid sequence, 99 residues long: Putative septation protein SpoVG (99 aa).

Belongs to the SpoVG family.

Functionally, could be involved in septation. This is Putative septation protein SpoVG from Myxococcus xanthus (strain DK1622).